Reading from the N-terminus, the 187-residue chain is Large ribosomal subunit protein uL5 (187 aa).

Belongs to the universal ribosomal protein uL5 family. Part of the 50S ribosomal subunit; part of the 5S rRNA/L5/L18/L25 subcomplex. Contacts the 5S rRNA and the P site tRNA. Forms a bridge to the 30S subunit in the 70S ribosome.

This is one of the proteins that bind and probably mediate the attachment of the 5S RNA into the large ribosomal subunit, where it forms part of the central protuberance. In the 70S ribosome it contacts protein S13 of the 30S subunit (bridge B1b), connecting the 2 subunits; this bridge is implicated in subunit movement. Contacts the P site tRNA; the 5S rRNA and some of its associated proteins might help stabilize positioning of ribosome-bound tRNAs. The sequence is that of Large ribosomal subunit protein uL5 from Malacoplasma penetrans (strain HF-2) (Mycoplasma penetrans).